A 115-amino-acid chain; its full sequence is Large ribosomal subunit protein bL19 (115 aa).

Belongs to the bacterial ribosomal protein bL19 family.

Functionally, this protein is located at the 30S-50S ribosomal subunit interface and may play a role in the structure and function of the aminoacyl-tRNA binding site. This Lactobacillus acidophilus (strain ATCC 700396 / NCK56 / N2 / NCFM) protein is Large ribosomal subunit protein bL19.